A 272-amino-acid chain; its full sequence is Replication-associated protein A (272 aa).

A CRESS-DNA virus Rep endonuclease domain is found at S11–F114. An RCR-1 motif is present at residues F18–Y21. 3 residues coordinate a divalent metal cation: E52, H60, and H62. The short motif at H60–H62 is the RCR-2 element. Y100 (for DNA cleavage activity) is an active-site residue. Positions Y100 to K103 match the RCR-3 motif. E104 is a binding site for a divalent metal cation. The segment at S175 to F187 is oligomerization. Residues L198 to E202 are binding to RBR1. Positions M221–L230 are transactivation. A disordered region spans residues S245 to A272. Positions R254–P264 are enriched in polar residues.

This sequence belongs to the geminiviridae Rep protein family. Homooligomer. Interacts with host retinoblastoma-related protein 1 (RBR1), and may thereby deregulate the host cell cycle. Part of the C- and V-complexes which are RepA-Rep-DNA complexes involved in the c-sense and v-sense transcription. Requires Mg(2+) as cofactor. It depends on Mn(2+) as a cofactor.

Its subcellular location is the host nucleus. The protein resides in the host cytoplasm. Its function is as follows. Implicated in enhancement of V-sense gene expression. Acts a an inhibitor of C-sense gene transcription. This chain is Replication-associated protein A, found in Maize streak virus genotype A (isolate Nigeria) (MSV).